A 511-amino-acid polypeptide reads, in one-letter code: Cobyric acid synthase (511 aa).

Positions Leu251–Phe443 constitute a GATase cobBQ-type domain. Residue Cys332 is the Nucleophile of the active site. His435 is a catalytic residue.

It belongs to the CobB/CobQ family. CobQ subfamily.

Its pathway is cofactor biosynthesis; adenosylcobalamin biosynthesis. Functionally, catalyzes amidations at positions B, D, E, and G on adenosylcobyrinic A,C-diamide. NH(2) groups are provided by glutamine, and one molecule of ATP is hydrogenolyzed for each amidation. The chain is Cobyric acid synthase from Listeria monocytogenes serotype 4a (strain HCC23).